The following is a 337-amino-acid chain: Cytochrome P450 monooxygenase dpmpJ (337 aa).

A helical transmembrane segment spans residues 4–24 (LILHHPYASLAAGILLYFFCL). Asparagine 158 carries N-linked (GlcNAc...) asparagine glycosylation.

The protein belongs to the cytochrome P450 family. The cofactor is heme.

It is found in the membrane. It participates in secondary metabolite biosynthesis; terpenoid biosynthesis. Cytochrome P450 monooxygenase; part of the gene cluster that mediates the biosynthesis of diterpenoid pyrones. The first step of the pathway is the synthesis of the alpha-pyrone moiety by the polyketide synthase dpmpA via condensation of one acetyl-CoA starter unit with 3 malonyl-CoA units and 2 methylations. The alpha-pyrone is then combined with geranylgeranyl pyrophosphate (GGPP) formed by the GGPP synthase dpmpD through the action of the prenyltransferase dpmpC to yield a linear alpha-pyrone diterpenoid. Subsequent steps in the diterpenoid pyrone biosynthetic pathway involve the decalin core formation, which is initiated by the epoxidation of the C10-C11 olefin by the FAD-dependent oxidoreductase dpmpE, and is followed by a cyclization cascade catalyzed by the terpene cyclase dpmpB. The short chain dehydrogenase/reductase dpmpG then oxidizes the 8S hydroxy group to a ketone and the short chain dehydrogenase/reductase dpmpH reduces the ketone to the 8R hydroxy group to yield higginsianin B. Higginsianin B is further methylated by the methyltransferase dpmpI to produce the intermediate named FDDP B. The cytochrome P450 monooxygenase dpmpJ then oxidizes the C-26 methyl to primary alcohol, producing the final diterpenoid pyrone with a C-26 primary alcohol on the gamma-pyrone moiety named FDDP C. In Macrophomina phaseolina (strain MS6) (Charcoal rot fungus), this protein is Cytochrome P450 monooxygenase dpmpJ.